Here is a 192-residue protein sequence, read N- to C-terminus: Lipid A acyltransferase PagP (192 aa).

The first 26 residues, 1-26 (MTVVNKSFLTILIFFCQILFPLNASA), serve as a signal peptide directing secretion. Residues His64, Asp107, and Ser108 contribute to the active site.

This sequence belongs to the lipid A palmitoyltransferase family. As to quaternary structure, homodimer.

It localises to the cell outer membrane. It carries out the reaction a lipid A + a 1,2-diacyl-sn-glycero-3-phosphocholine = a hepta-acyl lipid A + a 2-acyl-sn-glycero-3-phosphocholine. It catalyses the reaction a lipid IVA + a 1,2-diacyl-sn-glycero-3-phosphocholine = a lipid IVB + a 2-acyl-sn-glycero-3-phosphocholine. The catalysed reaction is a lipid IIA + a 1,2-diacyl-sn-glycero-3-phosphocholine = a lipid IIB + a 2-acyl-sn-glycero-3-phosphocholine. In terms of biological role, transfers a fatty acid residue from the sn-1 position of a phospholipid to the N-linked hydroxyfatty acid chain on the proximal unit of lipid A or its precursors. This is Lipid A acyltransferase PagP from Cronobacter sakazakii (strain ATCC BAA-894) (Enterobacter sakazakii).